A 605-amino-acid polypeptide reads, in one-letter code: Phosphoenolpyruvate carboxykinase (ATP) (605 aa).

Residues Ser27–Asn48 are compositionally biased toward low complexity. The segment at Ser27–Pro67 is disordered. Gly307 to Thr314 provides a ligand contact to ATP.

The protein belongs to the phosphoenolpyruvate carboxykinase (ATP) family.

The enzyme catalyses oxaloacetate + ATP = phosphoenolpyruvate + ADP + CO2. The protein operates within carbohydrate biosynthesis; gluconeogenesis. This Neurospora crassa (strain ATCC 24698 / 74-OR23-1A / CBS 708.71 / DSM 1257 / FGSC 987) protein is Phosphoenolpyruvate carboxykinase (ATP) (acu-6).